Consider the following 130-residue polypeptide: Large ribosomal subunit protein bL12 (130 aa).

The protein belongs to the bacterial ribosomal protein bL12 family. As to quaternary structure, homodimer. Part of the ribosomal stalk of the 50S ribosomal subunit. Forms a multimeric L10(L12)X complex, where L10 forms an elongated spine to which 2 to 4 L12 dimers bind in a sequential fashion. Binds GTP-bound translation factors.

Functionally, forms part of the ribosomal stalk which helps the ribosome interact with GTP-bound translation factors. Is thus essential for accurate translation. The polypeptide is Large ribosomal subunit protein bL12 (Mycobacterium leprae (strain TN)).